We begin with the raw amino-acid sequence, 321 residues long: Acetyl-coenzyme A carboxylase carboxyl transferase subunit alpha (321 aa).

In terms of domain architecture, CoA carboxyltransferase C-terminal spans 39–293; it reads RLQQKSQNLA…RRALGDALRQ (255 aa).

The protein belongs to the AccA family. In terms of assembly, acetyl-CoA carboxylase is a heterohexamer composed of biotin carboxyl carrier protein (AccB), biotin carboxylase (AccC) and two subunits each of ACCase subunit alpha (AccA) and ACCase subunit beta (AccD).

It is found in the cytoplasm. It catalyses the reaction N(6)-carboxybiotinyl-L-lysyl-[protein] + acetyl-CoA = N(6)-biotinyl-L-lysyl-[protein] + malonyl-CoA. It participates in lipid metabolism; malonyl-CoA biosynthesis; malonyl-CoA from acetyl-CoA: step 1/1. Its function is as follows. Component of the acetyl coenzyme A carboxylase (ACC) complex. First, biotin carboxylase catalyzes the carboxylation of biotin on its carrier protein (BCCP) and then the CO(2) group is transferred by the carboxyltransferase to acetyl-CoA to form malonyl-CoA. In Bordetella bronchiseptica (strain ATCC BAA-588 / NCTC 13252 / RB50) (Alcaligenes bronchisepticus), this protein is Acetyl-coenzyme A carboxylase carboxyl transferase subunit alpha.